The following is a 115-amino-acid chain: NADH-ubiquinone oxidoreductase chain 3 (115 aa).

The next 3 helical transmembrane spans lie at 4-24 (LLAM…AFWL), 55-75 (FFLV…LLPI), and 87-107 (MMLT…YEWI).

Belongs to the complex I subunit 3 family. As to quaternary structure, core subunit of respiratory chain NADH dehydrogenase (Complex I) which is composed of 45 different subunits. Interacts with TMEM186. Interacts with TMEM242.

The protein localises to the mitochondrion inner membrane. It catalyses the reaction a ubiquinone + NADH + 5 H(+)(in) = a ubiquinol + NAD(+) + 4 H(+)(out). Core subunit of the mitochondrial membrane respiratory chain NADH dehydrogenase (Complex I) which catalyzes electron transfer from NADH through the respiratory chain, using ubiquinone as an electron acceptor. Essential for the catalytic activity of complex I. The polypeptide is NADH-ubiquinone oxidoreductase chain 3 (Neotoma floridana (Eastern woodrat)).